Consider the following 283-residue polypeptide: Aspartate dehydrogenase domain-containing protein (283 aa).

2 positions are modified to phosphoserine: Ser20 and Ser168.

It belongs to the L-aspartate dehydrogenase family.

This Homo sapiens (Human) protein is Aspartate dehydrogenase domain-containing protein.